The primary structure comprises 708 residues: ARF GTPase-activating protein GIT2 (708 aa).

Residues 1–124 form the Arf-GAP domain; it reads MSKRLRSSDV…AFVHRLPCRE (124 aa). The segment at 11–34 adopts a C4-type zinc-finger fold; that stretch reads CADCNGPDPSWASVNRGTFICDEC. ANK repeat units follow at residues 132 to 161, 166 to 195, and 199 to 228; these read DLSK…QANF, KGST…DPGT, and SGKT…ELTD. The tract at residues 376–592 is disordered; that stretch reads STQHSTESQD…SPTLPSTEDV (217 aa). A compositionally biased stretch (acidic residues) spans 384–401; the sequence is QDNDQPDYDSVASDEDTD. Phosphoserine occurs at positions 393 and 396. Phosphothreonine is present on Thr400. Residues 407–438 are compositionally biased toward polar residues; sequence SKANRQKLQTLQSENSSLRRQATASACQVQTG. A compositionally biased stretch (low complexity) spans 504–518; sequence TSSSSLPSFPSTLSW. A phosphoserine mark is found at Ser508, Ser511, and Ser519. Positions 519–532 are enriched in basic and acidic residues; sequence SRDESARRASRLEK. Position 536 is a phosphothreonine (Thr536). Ser563 is subject to Phosphoserine.

As to quaternary structure, may form heterooligomers with GIT1. Directly interacts with protein Piccolo/PCLO. Interacts with PPFIA1 and PPFIA2. Interacts with ARHGEF7. Identified in a complex with ARHGEF6 and BIN2. Interacts with PAK3. Interacts with PXN/paxillin. Interacts with TGFB1I1. Forms a complex with EFNB1 and GRB4/NCK2. In terms of processing, tyrosine phosphorylated when coexpressed in cells with PTK2/FAK1 and SRC. As to expression, expressed in the brain (at protein level).

Its function is as follows. GTPase-activating protein for ADP ribosylation factor family members, including ARF1. This Mus musculus (Mouse) protein is ARF GTPase-activating protein GIT2 (Git2).